We begin with the raw amino-acid sequence, 700 residues long: Acetyl-coenzyme A carboxylase carboxyl transferase subunit beta, chloroplastic (700 aa).

4 residues coordinate Zn(2+): Cys34, Cys37, Cys53, and Cys56. Residues 34-56 (CENCETLIYKKSLLEQKGVCAEC) form a C4-type zinc finger. In terms of domain architecture, CoA carboxyltransferase N-terminal spans 445–700 (KKGRDTKDTE…ETIEIYMYGD (256 aa)).

The protein belongs to the AccD/PCCB family. Acetyl-CoA carboxylase is a heterohexamer composed of biotin carboxyl carrier protein, biotin carboxylase and 2 subunits each of ACCase subunit alpha and ACCase plastid-coded subunit beta (accD). Zn(2+) serves as cofactor.

Its subcellular location is the plastid. It is found in the chloroplast stroma. The enzyme catalyses N(6)-carboxybiotinyl-L-lysyl-[protein] + acetyl-CoA = N(6)-biotinyl-L-lysyl-[protein] + malonyl-CoA. The protein operates within lipid metabolism; malonyl-CoA biosynthesis; malonyl-CoA from acetyl-CoA: step 1/1. Its function is as follows. Component of the acetyl coenzyme A carboxylase (ACC) complex. Biotin carboxylase (BC) catalyzes the carboxylation of biotin on its carrier protein (BCCP) and then the CO(2) group is transferred by the transcarboxylase to acetyl-CoA to form malonyl-CoA. This chain is Acetyl-coenzyme A carboxylase carboxyl transferase subunit beta, chloroplastic, found in Cryptomeria japonica (Japanese cedar).